A 317-amino-acid polypeptide reads, in one-letter code: Lysosomal-associated transmembrane protein 4B (317 aa).

The segment at 25–73 (AFGAKGTDPAEARSSRGIEEAGPRAHGRAGREPERRRSRQQRRGGLQAR) is disordered. Basic and acidic residues predominate over residues 32–59 (DPAEARSSRGIEEAGPRAHGRAGREPER). 4 helical membrane-spanning segments follow: residues 117-137 (ILLG…LLSA), 163-183 (MCIA…ATYG), 191-211 (WIIP…LVAI), and 244-264 (CLVL…GYLI). The tract at residues 205–221 (LNMLVAITVLIYPNSIQ) is required for NEDD4 interaction.

The protein belongs to the LAPTM4/LAPTM5 transporter family. In terms of assembly, homooligomer; upon reaching the lysosomes. Interacts with MCOLN1. Interacts with NEDD4; may play a role in the lysosomal sorting of LAPTM4B; enhances HGS association with NEDD4; mediates inhibition of EGFR degradation. Interacts with PIP5K1C; promotes SNX5 association with LAPTM4B; kinase activity of PIP5K1C is required; interaction is regulated by phosphatidylinositol 4,5-bisphosphate generated by PIP5K1C. Interacts with HGS; promotes HGS ubiquitination. Interacts with SNX5. Interacts with SLC3A2 and SLC7A5; recruits SLC3A2 and SLC7A5 to lysosomes to promote leucine uptake into these organelles and is required for mTORC1 activation. Interacts with LRRC32; decreases TGFB1 production in regulatory T cells. Interacts with BECN1; competes with EGFR for LAPTM4B binding; regulates EGFR activity. Interacts with EGFR; positively correlates with EGFR activation. In terms of processing, undergoes proteolytic cleavage following delivery to the lysosomes. Post-translationally, ubiquitinated by NEDD4.

The protein resides in the endomembrane system. It localises to the late endosome membrane. Its subcellular location is the cell membrane. It is found in the cell projection. The protein localises to the lysosome membrane. The protein resides in the endosome membrane. It localises to the endosome. Its subcellular location is the multivesicular body membrane. It is found in the multivesicular body lumen. Its function is as follows. Required for optimal lysosomal function. Blocks EGF-stimulated EGFR intraluminal sorting and degradation. Conversely by binding with the phosphatidylinositol 4,5-bisphosphate, regulates its PIP5K1C interaction, inhibits HGS ubiquitination and relieves LAPTM4B inhibition of EGFR degradation. Recruits SLC3A2 and SLC7A5 (the Leu transporter) to the lysosome, promoting entry of leucine and other essential amino acid (EAA) into the lysosome, stimulating activation of proton-transporting vacuolar (V)-ATPase protein pump (V-ATPase) and hence mTORC1 activation. Plays a role as negative regulator of TGFB1 production in regulatory T cells. Binds ceramide and facilitates its exit from late endosome in order to control cell death pathways. This Homo sapiens (Human) protein is Lysosomal-associated transmembrane protein 4B.